Consider the following 334-residue polypeptide: Ventral anterior homeobox 1 (334 aa).

Positions 1-34 (MFGKPDKMDVRCHSDAEAARVSKNAHKESRESKG) are enriched in basic and acidic residues. The segment at 1 to 41 (MFGKPDKMDVRCHSDAEAARVSKNAHKESRESKGAEGNLPA) is disordered. The segment at residues 100–159 (PKRTRTSFTAEQLYRLEMEFQRCQYVVGRERTELARQLNLSETQVKVWFQNRRTKQKKDQ) is a DNA-binding region (homeobox). Disordered regions lie at residues 234–263 (PGPA…GLHA) and 314–334 (SAFE…KALD). The span at 323-334 (NNKEGAEKKALD) shows a compositional bias: basic and acidic residues.

This sequence belongs to the EMX homeobox family.

The protein localises to the nucleus. Functionally, transcription factor that may function in dorsoventral specification of the forebrain. Required for axon guidance and major tract formation in the developing forebrain. May contribute to the differentiation of the neuroretina, pigmented epithelium and optic stalk. This chain is Ventral anterior homeobox 1 (VAX1), found in Homo sapiens (Human).